A 201-amino-acid polypeptide reads, in one-letter code: Single-stranded DNA-binding protein DdrA (201 aa).

Belongs to the RAD52 family. As to quaternary structure, the truncated form (1-160) of DdrA forms heptameric rings that can assemble into a 3-ring structure.

SsDNA-binding protein that contributes to the ionizing radiation resistance of D.deserti. Plays a role in DNA repair and genome reconstitution, in a RecA-independent process, since DdrA is essential for recovery from severe genomic fragmentation as a result of exposure to severe levels of ionizing radiation in an environment lacking nutrients. In vitro, binds to the 3'-ends of single-stranded DNA, and probably protects them from nuclease degradation. Thus, DdrA is part of a DNA end-protection system that helps to preserve genome integrity following irradiation or desiccation. This chain is Single-stranded DNA-binding protein DdrA (ddrA), found in Deinococcus deserti (strain DSM 17065 / CIP 109153 / LMG 22923 / VCD115).